We begin with the raw amino-acid sequence, 64 residues long: Large ribosomal subunit protein bL28 (64 aa).

The protein belongs to the bacterial ribosomal protein bL28 family.

The polypeptide is Large ribosomal subunit protein bL28 (Syntrophobacter fumaroxidans (strain DSM 10017 / MPOB)).